The sequence spans 300 residues: Ribosomal protein bS6--L-glutamate ligase (300 aa).

The region spanning 104–287 (LQLLARQGID…IAGRMIQWIE (184 aa)) is the ATP-grasp domain. ATP-binding positions include Lys141, 178–179 (EY), Asp187, and 211–213 (RSN). 3 residues coordinate Mg(2+): Asp248, Glu260, and Asn262. Residues Asp248, Glu260, and Asn262 each coordinate Mn(2+).

Belongs to the RimK family. Mg(2+) serves as cofactor. It depends on Mn(2+) as a cofactor.

An L-glutamate ligase that catalyzes the ATP-dependent post-translational addition of glutamate residues to the C-terminus of ribosomal protein bS6 (RpsF). Is also able to catalyze the synthesis of poly-alpha-glutamate in vitro, via ATP hydrolysis from unprotected glutamate as substrate. The number of glutamate residues added to either RpsF or to poly-alpha-glutamate changes with pH. The protein is Ribosomal protein bS6--L-glutamate ligase of Salmonella schwarzengrund (strain CVM19633).